The primary structure comprises 356 residues: GATA zinc finger domain-containing protein 17 (356 aa).

Residues 91–119 (LKEFDALEASLNAELECLELQYSSDTSEL) adopt a coiled-coil conformation. Low complexity predominate over residues 158-188 (TASTSTSTPTNTTTTTTTTSNSLTKNNNSAL). A disordered region spans residues 158 to 294 (TASTSTSTPT…DITEESKVKE (137 aa)). The span at 206 to 228 (SSDDEEDDQKDDQDKDDSDEDNV) shows a compositional bias: acidic residues. Positions 260–284 (TAITTTTTPITTTDSNIIGTTTTTD) are enriched in low complexity. Residues 304–331 (CYVCKVTETPYWRRGTDNGVVVDLCNEC) form a GATA-type zinc finger.

This is GATA zinc finger domain-containing protein 17 (gtaQ) from Dictyostelium discoideum (Social amoeba).